Here is a 348-residue protein sequence, read N- to C-terminus: NADH-cytochrome b5 reductase 2 (348 aa).

The chain crosses the membrane as a helical span at residues 41–61 (TLLYGAAAAAVAGAGYYFLGG). Positions 97–202 (QGWVSLKLEE…KGPLPKYPWT (106 aa)) constitute an FAD-binding FR-type domain. Position 205 to 240 (205 to 240 (KHGHIALVAGGTGITPMFQLCRAIFNNPDDQTKVTL)) interacts with FAD.

The protein belongs to the flavoprotein pyridine nucleotide cytochrome reductase family. It depends on FAD as a cofactor.

It is found in the mitochondrion outer membrane. The catalysed reaction is 2 Fe(III)-[cytochrome b5] + NADH = 2 Fe(II)-[cytochrome b5] + NAD(+) + H(+). Its function is as follows. May mediate the reduction of outer membrane cytochrome b5. The protein is NADH-cytochrome b5 reductase 2 (MCR1) of Chaetomium globosum (strain ATCC 6205 / CBS 148.51 / DSM 1962 / NBRC 6347 / NRRL 1970) (Soil fungus).